The chain runs to 256 residues: Adenosine 5'-phosphosulfate reductase (256 aa).

[4Fe-4S] cluster is bound by residues cysteine 120, cysteine 121, cysteine 203, and cysteine 206. The Nucleophile; cysteine thiosulfonate intermediate role is filled by cysteine 231.

Belongs to the PAPS reductase family. CysH subfamily. [4Fe-4S] cluster serves as cofactor.

It is found in the cytoplasm. It carries out the reaction [thioredoxin]-disulfide + sulfite + AMP + 2 H(+) = adenosine 5'-phosphosulfate + [thioredoxin]-dithiol. It participates in sulfur metabolism; hydrogen sulfide biosynthesis; sulfite from sulfate. Its function is as follows. Catalyzes the formation of sulfite from adenosine 5'-phosphosulfate (APS) using thioredoxin as an electron donor. This Allochromatium vinosum (strain ATCC 17899 / DSM 180 / NBRC 103801 / NCIMB 10441 / D) (Chromatium vinosum) protein is Adenosine 5'-phosphosulfate reductase.